The primary structure comprises 384 residues: Iron(3+)-hydroxamate import system permease protein FhuB (384 aa).

A run of 9 helical transmembrane segments spans residues 58-78 (GAVI…FLSI), 115-135 (TAAA…MQGM), 154-174 (FAVS…LVLW), 176-196 (FAGA…SRGG), 202-222 (LALA…AIAI), 243-263 (WSGV…AFFI), 296-316 (VILT…GLII), 330-350 (WIIP…DIAA), and 357-377 (FETP…FYLA).

It belongs to the binding-protein-dependent transport system permease family. FecCD subfamily. In terms of assembly, the complex is composed of an ATP-binding protein (FhuC), two transmembrane proteins (FhuB and FhuG) and a solute-binding protein (FhuD or YxeB).

The protein localises to the cell membrane. Its subcellular location is the membrane raft. In terms of biological role, part of the ABC transporter complex FhuBGCD involved in iron(3+)-hydroxamate import. Responsible for the translocation of the substrate across the membrane. This chain is Iron(3+)-hydroxamate import system permease protein FhuB (fhuB), found in Bacillus subtilis (strain 168).